Consider the following 515-residue polypeptide: MSMIAAFYGGKSILITGATGFMGKVLMEKLFRTSPDLKVVYILVRPKQGQTLQQRVFQILDSKLFEKVKEVCPNVHEKIRAISADLNQNDFAISKEDMKELLSHTNIIFHCAATVRFDDHLRHAVQLNVTATQQLLLMASQMPKLEAFIHISTAFSNCNLKHIDEVVYPCPVEPKKIIDSMEWLDDAIIDEITPKLIGDWPNTYTYTKALGEVVVQQEGGNLNIAIIRPSIMGATWQEPFPGWVDNLNGPSGLIIAAGKGFLRSIRATPMAVADLIPADTVVNLTLAVGWYTAVHRPKSTLVYHCTSGNLNPCNWGKMGLQVLATFEKIPFERAFRRPNADFTTNNITTHYWNAVSHRAPAIIYDFYLRLTGRKPRMTKLMNRLLRTLSMLEYFVNRSWEWSTYNTEMLMSELSPEDQRVFNFDVRQLNWLEYIENYVLGVKKYLLKEDMAGIPEAKQHLKRLRNIHYLFNTALFLIAWRLLIARSQVARNVWFFIVSFCYKFLSYFRASSTLNV.

The Cytoplasmic portion of the chain corresponds to 1 to 465 (MSMIAAFYGG…AKQHLKRLRN (465 aa)). A helical membrane pass occupies residues 466-484 (IHYLFNTALFLIAWRLLIA). The Peroxisomal segment spans residues 485–515 (RSQVARNVWFFIVSFCYKFLSYFRASSTLNV).

The protein belongs to the fatty acyl-CoA reductase family.

It localises to the peroxisome membrane. The catalysed reaction is a long-chain fatty acyl-CoA + 2 NADPH + 2 H(+) = a long-chain primary fatty alcohol + 2 NADP(+) + CoA. It carries out the reaction hexadecanoyl-CoA + 2 NADPH + 2 H(+) = hexadecan-1-ol + 2 NADP(+) + CoA. The enzyme catalyses octadecanoyl-CoA + 2 NADPH + 2 H(+) = octadecan-1-ol + 2 NADP(+) + CoA. It catalyses the reaction a very long-chain fatty acyl-CoA + 2 NADPH + 2 H(+) = a very long-chain primary fatty alcohol + 2 NADP(+) + CoA. The catalysed reaction is an ultra-long-chain fatty acyl-CoA + 2 NADPH + 2 H(+) = an ultra long-chain primary fatty alcohol + 2 NADP(+) + CoA. It carries out the reaction eicosanoyl-CoA + 2 NADPH + 2 H(+) = eicosan-1-ol + 2 NADP(+) + CoA. The enzyme catalyses docosanoyl-CoA + 2 NADPH + 2 H(+) = docosan-1-ol + 2 NADP(+) + CoA. It catalyses the reaction tetracosanoyl-CoA + 2 NADPH + 2 H(+) = tetracosan-1-ol + 2 NADP(+) + CoA. The catalysed reaction is hexacosanoyl-CoA + 2 NADPH + 2 H(+) = hexacosan-1-ol + 2 NADP(+) + CoA. It carries out the reaction octacosanoyl-CoA + 2 NADPH + 2 H(+) = octacosan-1-ol + 2 NADP(+) + CoA. The enzyme catalyses triacontanoyl-CoA + 2 NADPH + 2 H(+) = triacontan-1-ol + 2 NADP(+) + CoA. It catalyses the reaction 18-methylnonadecanoyl-CoA + 2 NADPH + 2 H(+) = 18-methylnonadecan-1-ol + 2 NADP(+) + CoA. The catalysed reaction is 20-methylheneicosanoyl-CoA + 2 NADPH + 2 H(+) = 20-methylheneicosan-1-ol + 2 NADP(+) + CoA. It carries out the reaction 22-methyltricosanoyl-CoA + 2 NADPH + 2 H(+) = 22-methyltricosan-1-ol + 2 NADP(+) + CoA. The enzyme catalyses 24-methylpentacosanoyl-CoA + 2 NADPH + 2 H(+) = 24-methylpentacosan-1-ol + 2 NADP(+) + CoA. In terms of biological role, catalyzes the reduction of saturated but not unsaturated C16 or C18 fatty acyl-CoA to fatty alcohols (FAls). A lower activity can be observed with shorter fatty acyl-CoA substrates. Can produce very long-chain and ultra long-chain FAls, regardless of whether they have a straight or branched chain. Involved in the production of ether lipids/plasmalogens and wax monoesters whose synthesis requires FAls as substrates. This chain is Fatty acyl-CoA reductase 2, found in Bos taurus (Bovine).